The chain runs to 166 residues: MTESTSRRPAYARLLDRAVRILAVRDHSEQELRRKLAAPIMGKNGPEEIDATAEDYERVIAWCHEHGYLDDSRFVARFIASRSRKGYGPARIRQELNQKGISREATEKAMRECDIDWCALARDQATRKYDEPLPTVFSEKVKIQRFLLYRGYLMEDIQDIWRNFAD.

It belongs to the RecX family.

Its subcellular location is the cytoplasm. Its function is as follows. Modulates RecA activity. This is Regulatory protein RecX from Shigella boydii serotype 4 (strain Sb227).